Here is a 68-residue protein sequence, read N- to C-terminus: Large ribosomal subunit protein uL29 (68 aa).

It belongs to the universal ribosomal protein uL29 family.

This Geobacillus sp. (strain WCH70) protein is Large ribosomal subunit protein uL29.